Reading from the N-terminus, the 238-residue chain is Ribonuclease PH (238 aa).

Phosphate is bound by residues R86 and G124–R126.

The protein belongs to the RNase PH family. As to quaternary structure, homohexameric ring arranged as a trimer of dimers.

The catalysed reaction is tRNA(n+1) + phosphate = tRNA(n) + a ribonucleoside 5'-diphosphate. Phosphorolytic 3'-5' exoribonuclease that plays an important role in tRNA 3'-end maturation. Removes nucleotide residues following the 3'-CCA terminus of tRNAs; can also add nucleotides to the ends of RNA molecules by using nucleoside diphosphates as substrates, but this may not be physiologically important. Probably plays a role in initiation of 16S rRNA degradation (leading to ribosome degradation) during starvation. This Maricaulis maris (strain MCS10) (Caulobacter maris) protein is Ribonuclease PH.